Reading from the N-terminus, the 286-residue chain is Phosphonates import ATP-binding protein PhnC (286 aa).

In terms of domain architecture, ABC transporter spans 3–246 (FHLKQVTRRF…AVTEIYGTDS (244 aa)). Position 35-42 (35-42 (GRSGAGKS)) interacts with ATP.

This sequence belongs to the ABC transporter superfamily. Phosphonates importer (TC 3.A.1.9.1) family. The complex is composed of two ATP-binding proteins (PhnC), two transmembrane proteins (PhnE) and a solute-binding protein (PhnD).

Its subcellular location is the cell inner membrane. It carries out the reaction phosphonate(out) + ATP + H2O = phosphonate(in) + ADP + phosphate + H(+). Its function is as follows. Part of the ABC transporter complex PhnCDE involved in phosphonates import. Responsible for energy coupling to the transport system. The sequence is that of Phosphonates import ATP-binding protein PhnC from Agrobacterium fabrum (strain C58 / ATCC 33970) (Agrobacterium tumefaciens (strain C58)).